The chain runs to 189 residues: Elongation factor P 2 (189 aa).

Belongs to the elongation factor P family.

The protein resides in the cytoplasm. It participates in protein biosynthesis; polypeptide chain elongation. Functionally, involved in peptide bond synthesis. Stimulates efficient translation and peptide-bond synthesis on native or reconstituted 70S ribosomes in vitro. Probably functions indirectly by altering the affinity of the ribosome for aminoacyl-tRNA, thus increasing their reactivity as acceptors for peptidyl transferase. The protein is Elongation factor P 2 of Mesorhizobium japonicum (strain LMG 29417 / CECT 9101 / MAFF 303099) (Mesorhizobium loti (strain MAFF 303099)).